The chain runs to 436 residues: ABC transporter permease YtrF (436 aa).

An N-terminal signal peptide occupies residues 1–31 (MRFKDQVHFIRRNMKKNRLRVFMTILATTMA). Cysteine 32 carries the N-palmitoyl cysteine lipid modification. Cysteine 32 carries S-diacylglycerol cysteine lipidation. The stretch at 115-165 (NMNDELKANMELEKGRVAKSENEIVVGYDFAKRLLTKKESEEYNKKIEEAK) forms a coiled coil. 3 helical membrane-spanning segments follow: residues 293-313 (FKIG…IGIF), 350-370 (YIGI…SYLV), and 396-416 (IPAS…VISG).

This sequence belongs to the ABC-4 integral membrane protein family. The complex is composed of 2 ATP-binding proteins (YtrB and YtrE), 2 transmembrane proteins (YtrC and YtrD) and a solute-binding protein (YtrF).

The protein resides in the cell membrane. Functionally, part of the ABC transporter complex YtrBCDEF that plays a role in acetoin utilization during stationary phase and sporulation. The sequence is that of ABC transporter permease YtrF (ytrF) from Bacillus subtilis (strain 168).